We begin with the raw amino-acid sequence, 147 residues long: 3-dehydroquinate dehydratase (147 aa).

The Proton acceptor role is filled by Tyr-23. Residues Asn-74, His-80, and Asp-87 each contribute to the substrate site. His-100 acts as the Proton donor in catalysis. Residues 101 to 102 (IS) and Arg-111 each bind substrate.

It belongs to the type-II 3-dehydroquinase family. In terms of assembly, homododecamer.

The enzyme catalyses 3-dehydroquinate = 3-dehydroshikimate + H2O. It participates in metabolic intermediate biosynthesis; chorismate biosynthesis; chorismate from D-erythrose 4-phosphate and phosphoenolpyruvate: step 3/7. Functionally, catalyzes a trans-dehydration via an enolate intermediate. This Bacillus pumilus (strain SAFR-032) protein is 3-dehydroquinate dehydratase.